The following is a 438-amino-acid chain: Trigger factor (438 aa).

One can recognise a PPIase FKBP-type domain in the interval 162–247 (GDIVTIDFEG…VKEIKVKELP (86 aa)).

The protein belongs to the FKBP-type PPIase family. Tig subfamily.

Its subcellular location is the cytoplasm. The enzyme catalyses [protein]-peptidylproline (omega=180) = [protein]-peptidylproline (omega=0). Functionally, involved in protein export. Acts as a chaperone by maintaining the newly synthesized protein in an open conformation. Functions as a peptidyl-prolyl cis-trans isomerase. The sequence is that of Trigger factor from Caldicellulosiruptor saccharolyticus (strain ATCC 43494 / DSM 8903 / Tp8T 6331).